A 406-amino-acid chain; its full sequence is Bifunctional enzyme IspD/IspF (406 aa).

A 2-C-methyl-D-erythritol 4-phosphate cytidylyltransferase region spans residues 1-247 (MSLIRVNGEA…AFFFNPAKDT (247 aa)). The interval 248-406 (FIGMGFDTHA…HVSMRYKQKL (159 aa)) is 2-C-methyl-D-erythritol 2,4-cyclodiphosphate synthase. The a divalent metal cation site is built by Asp-254 and His-256. 4-CDP-2-C-methyl-D-erythritol 2-phosphate is bound by residues 254–256 (DTH) and 280–281 (HS). Residue His-288 participates in a divalent metal cation binding. 4-CDP-2-C-methyl-D-erythritol 2-phosphate is bound by residues 302–304 (DIG), 307–311 (FPDND), 378–381 (TTME), Phe-385, and Lys-388.

This sequence in the N-terminal section; belongs to the IspD/TarI cytidylyltransferase family. IspD subfamily. The protein in the C-terminal section; belongs to the IspF family. A divalent metal cation serves as cofactor.

It carries out the reaction 2-C-methyl-D-erythritol 4-phosphate + CTP + H(+) = 4-CDP-2-C-methyl-D-erythritol + diphosphate. It catalyses the reaction 4-CDP-2-C-methyl-D-erythritol 2-phosphate = 2-C-methyl-D-erythritol 2,4-cyclic diphosphate + CMP. It participates in isoprenoid biosynthesis; isopentenyl diphosphate biosynthesis via DXP pathway; isopentenyl diphosphate from 1-deoxy-D-xylulose 5-phosphate: step 2/6. Its pathway is isoprenoid biosynthesis; isopentenyl diphosphate biosynthesis via DXP pathway; isopentenyl diphosphate from 1-deoxy-D-xylulose 5-phosphate: step 4/6. In terms of biological role, bifunctional enzyme that catalyzes the formation of 4-diphosphocytidyl-2-C-methyl-D-erythritol from CTP and 2-C-methyl-D-erythritol 4-phosphate (MEP) (IspD), and catalyzes the conversion of 4-diphosphocytidyl-2-C-methyl-D-erythritol 2-phosphate (CDP-ME2P) to 2-C-methyl-D-erythritol 2,4-cyclodiphosphate (ME-CPP) with a corresponding release of cytidine 5-monophosphate (CMP) (IspF). In Helicobacter pylori (strain G27), this protein is Bifunctional enzyme IspD/IspF.